We begin with the raw amino-acid sequence, 271 residues long: Chymotrypsin-like elastase family member 2A (271 aa).

An N-terminal signal peptide occupies residues 1 to 16 (MIRTLLLSALVAGALS). The propeptide at 17-30 (CGYPTYEVQHDVSR) is activation peptide. The Peptidase S1 domain maps to 31–269 (VVGGQEASPN…YIDWINSVIA (239 aa)). Cys60 and Cys76 form a disulfide bridge. Residues His75 and Asp123 each act as charge relay system in the active site. 3 disulfide bridges follow: Cys157-Cys224, Cys188-Cys204, and Cys214-Cys245. Ser218 acts as the Charge relay system in catalysis.

This sequence belongs to the peptidase S1 family. Elastase subfamily. In terms of assembly, interacts with CPA1. Interacts with SERPINA1. In terms of tissue distribution, pancreas.

The protein resides in the secreted. The catalysed reaction is Preferential cleavage: Leu-|-Xaa, Met-|-Xaa and Phe-|-Xaa. Hydrolyzes elastin.. In terms of biological role, elastase that enhances insulin signaling and might have a physiologic role in cellular glucose metabolism. Circulates in plasma and reduces platelet hyperactivation, triggers both insulin secretion and degradation, and increases insulin sensitivity. The protein is Chymotrypsin-like elastase family member 2A (Cela2a) of Rattus norvegicus (Rat).